The sequence spans 107 residues: Thioredoxin-1 (107 aa).

A Thioredoxin domain is found at 2 to 106 (ASVRTMTDFH…LTNMMAKLVK (105 aa)). Catalysis depends on nucleophile residues Cys-31 and Cys-34. A disulfide bridge connects residues Cys-31 and Cys-34.

It belongs to the thioredoxin family.

The protein localises to the nucleus. Functionally, participates in various redox reactions through the reversible oxidation of its active center dithiol to a disulfide and catalyzes dithiol-disulfide exchange reactions. As a reducing substrate of peroxiredoxin 1, thioredoxin 2 is preferred over thioredoxin 1. Required for female meiosis and early embryonic development. In Drosophila yakuba (Fruit fly), this protein is Thioredoxin-1 (dhd).